A 495-amino-acid chain; its full sequence is Cytochrome P450 2B15 (495 aa).

Ser-129 is subject to Phosphoserine; by PKA. Residue Cys-437 coordinates heme.

It belongs to the cytochrome P450 family. It depends on heme as a cofactor.

It is found in the endoplasmic reticulum membrane. The protein localises to the microsome membrane. It catalyses the reaction an organic molecule + reduced [NADPH--hemoprotein reductase] + O2 = an alcohol + oxidized [NADPH--hemoprotein reductase] + H2O + H(+). Functionally, cytochromes P450 are a group of heme-thiolate monooxygenases. In liver microsomes, this enzyme is involved in an NADPH-dependent electron transport pathway. It oxidizes a variety of structurally unrelated compounds, including steroids, fatty acids, and xenobiotics. The polypeptide is Cytochrome P450 2B15 (Cyp2b15) (Rattus norvegicus (Rat)).